A 556-amino-acid chain; its full sequence is Formate--tetrahydrofolate ligase 1 (556 aa).

65 to 72 (TPAGEGKS) lines the ATP pocket.

It belongs to the formate--tetrahydrofolate ligase family.

It carries out the reaction (6S)-5,6,7,8-tetrahydrofolate + formate + ATP = (6R)-10-formyltetrahydrofolate + ADP + phosphate. It participates in one-carbon metabolism; tetrahydrofolate interconversion. This chain is Formate--tetrahydrofolate ligase 1, found in Streptococcus pyogenes serotype M4 (strain MGAS10750).